Here is a 387-residue protein sequence, read N- to C-terminus: Cystathionine gamma-lyase (387 aa).

Residues R53, Y105, and R110 each contribute to the substrate site. An N6-(pyridoxal phosphate)lysine modification is found at K202. E329 contributes to the substrate binding site.

Belongs to the trans-sulfuration enzymes family. As to quaternary structure, homotetramer. Interacts with CALM in a calcium-dependent manner. Requires pyridoxal 5'-phosphate as cofactor.

The protein localises to the cytoplasm. It catalyses the reaction L,L-cystathionine + H2O = 2-oxobutanoate + L-cysteine + NH4(+). It carries out the reaction L-cysteine + H2O = hydrogen sulfide + pyruvate + NH4(+) + H(+). The enzyme catalyses L-homocysteine + H2O = 2-oxobutanoate + hydrogen sulfide + NH4(+) + H(+). The catalysed reaction is L-homoserine = 2-oxobutanoate + NH4(+). The protein operates within amino-acid biosynthesis; L-cysteine biosynthesis; L-cysteine from L-homocysteine and L-serine: step 2/2. In terms of biological role, catalyzes the last step in the trans-sulfuration pathway from L-methionine to L-cysteine in a pyridoxal-5'-phosphate (PLP)-dependent manner, which consists on cleaving the L,L-cystathionine molecule into L-cysteine, ammonia and 2-oxobutanoate. Part of the L-cysteine derived from the trans-sulfuration pathway is utilized for biosynthesis of the ubiquitous antioxidant glutathione. Besides its role in the conversion of L-cystathionine into L-cysteine, it utilizes L-cysteine and L-homocysteine as substrates (at much lower rates than L,L-cystathionine) to produce the endogenous gaseous signaling molecule hydrogen sulfide (H2S). This chain is Cystathionine gamma-lyase (cysA), found in Dictyostelium discoideum (Social amoeba).